The sequence spans 1086 residues: Auxin response factor 19 (1086 aa).

Positions 126–228 (FCKTLTASDT…QLMLGIRRAN (103 aa)) form a DNA-binding region, TF-B3. The span at 454 to 485 (PSKLLNFQSPNLSSANSQFNKPNTVNHISQQM) shows a compositional bias: polar residues. 4 disordered regions span residues 454–504 (PSKL…QQQQ), 545–564 (QSPN…QSML), 624–647 (LSQN…QQLQ), and 659–788 (QQQS…SVFE). Positions 486–504 (QAQPAMVKSQQQQQQQQQQ) are enriched in low complexity. Over residues 659 to 697 (QQQSIPPVSSSLQPQLSALQQTQSHQLQQLLSSQNQQPL) the composition is skewed to low complexity. A compositionally biased stretch (polar residues) spans 700-710 (GNNSFPASTFM). Residues 711 to 724 (QPPQIQVSPQQQGQ) show a composition bias toward low complexity. Polar residues predominate over residues 747–771 (SCSTSPSANNTGHDNVSPTNFLSRN). The segment covering 772 to 785 (QQQGQAASVSASDS) has biased composition (low complexity). Positions 958–1051 (RTYTKVQKRG…EVQQMSLDGD (94 aa)) constitute a PB1 domain.

The protein belongs to the ARF family. Homodimers and heterodimers. Interacts with the auxin-responsive protein IAA1. Binds to JMJ30. Binds to ATXR2 in the nucleus.

It is found in the nucleus. Functionally, auxin response factors (ARFs) are transcriptional factors that bind specifically to the DNA sequence 5'-TGTCTC-3' found in the auxin-responsive promoter elements (AuxREs). Could act as transcriptional activator or repressor. Formation of heterodimers with Aux/IAA proteins may alter their ability to modulate early auxin response genes expression. Involved in ethylene responses. Regulates lateral root formation through direct regulation of LBD16 and/or LBD29. Functionally redundant with ARF7. Involved in cellular dedifferentiation during callus formation on callus-inducing medium (CIM) and in an ATXR2-dependent manner. This Arabidopsis thaliana (Mouse-ear cress) protein is Auxin response factor 19.